The following is a 64-amino-acid chain: Large ribosomal subunit protein bL35 (64 aa).

Positions 1 to 54 (MPKIKSNSGAAKRFKKTAHGFKHKQSFRSHILTKKSTKRKRQLRGMKQIHDADK) are disordered. Residues 12–44 (KRFKKTAHGFKHKQSFRSHILTKKSTKRKRQLR) are compositionally biased toward basic residues.

It belongs to the bacterial ribosomal protein bL35 family.

The sequence is that of Large ribosomal subunit protein bL35 from Chromohalobacter salexigens (strain ATCC BAA-138 / DSM 3043 / CIP 106854 / NCIMB 13768 / 1H11).